The chain runs to 226 residues: PKHD-type hydroxylase PiuC (226 aa).

The region spanning 78 to 178 is the Fe2OG dioxygenase domain; it reads KVFPPLFNCY…RYASFFWTQS (101 aa). Fe cation-binding residues include H96, D98, and H159. R169 is a binding site for 2-oxoglutarate.

The cofactor is Fe(2+). L-ascorbate serves as cofactor.

This is PKHD-type hydroxylase PiuC (piuC) from Pseudomonas aeruginosa (strain ATCC 15692 / DSM 22644 / CIP 104116 / JCM 14847 / LMG 12228 / 1C / PRS 101 / PAO1).